The sequence spans 473 residues: Argininosuccinate lyase (473 aa).

Belongs to the lyase 1 family. Argininosuccinate lyase subfamily.

It is found in the cytoplasm. The catalysed reaction is 2-(N(omega)-L-arginino)succinate = fumarate + L-arginine. It participates in amino-acid biosynthesis; L-arginine biosynthesis; L-arginine from L-ornithine and carbamoyl phosphate: step 3/3. This chain is Argininosuccinate lyase, found in Mycobacteroides abscessus (strain ATCC 19977 / DSM 44196 / CCUG 20993 / CIP 104536 / JCM 13569 / NCTC 13031 / TMC 1543 / L948) (Mycobacterium abscessus).